Consider the following 210-residue polypeptide: MKKGLIAKKLGMTQIFADDGRRIPVTVVEAGPCIVLQKKTVETDGYNAIQVGFLAKDADKSGRALVGHCKSAGQGVFTYIREFRVEDVDRYTIGDSITAEIFAPGDYVDVTGTSIGKGFQGVIKRWGFRGGRSSHGSCFHRAPGSIGSSAWPSRVFKNKKMPGQLGNERVTVQRLQVVRVDTADNLLLIRGAIPGAKNGILLLKDSVKAR.

This sequence belongs to the universal ribosomal protein uL3 family. Part of the 50S ribosomal subunit. Forms a cluster with proteins L14 and L19.

In terms of biological role, one of the primary rRNA binding proteins, it binds directly near the 3'-end of the 23S rRNA, where it nucleates assembly of the 50S subunit. The chain is Large ribosomal subunit protein uL3 from Geobacter metallireducens (strain ATCC 53774 / DSM 7210 / GS-15).